Here is an 82-residue protein sequence, read N- to C-terminus: Small ribosomal subunit protein bS18 (82 aa).

Residues 1–20 (MVDINQIPTRRPFHRRRKTC) are disordered.

The protein belongs to the bacterial ribosomal protein bS18 family. In terms of assembly, part of the 30S ribosomal subunit. Forms a tight heterodimer with protein bS6.

Binds as a heterodimer with protein bS6 to the central domain of the 16S rRNA, where it helps stabilize the platform of the 30S subunit. The chain is Small ribosomal subunit protein bS18 from Brucella abortus (strain 2308).